A 131-amino-acid chain; its full sequence is Small ribosomal subunit protein uS8 (131 aa).

This sequence belongs to the universal ribosomal protein uS8 family. In terms of assembly, part of the 30S ribosomal subunit. Contacts proteins S5 and S12.

In terms of biological role, one of the primary rRNA binding proteins, it binds directly to 16S rRNA central domain where it helps coordinate assembly of the platform of the 30S subunit. This chain is Small ribosomal subunit protein uS8, found in Chlorobaculum tepidum (strain ATCC 49652 / DSM 12025 / NBRC 103806 / TLS) (Chlorobium tepidum).